A 486-amino-acid chain; its full sequence is Cysteine--tRNA ligase (486 aa).

A Zn(2+)-binding site is contributed by Cys-29. The short motif at Val-31–His-41 is the 'HIGH' region element. Zn(2+) contacts are provided by Cys-214, His-239, and Glu-243. The short motif at Lys-271–Ser-275 is the 'KMSKS' region element. Lys-274 is a binding site for ATP.

This sequence belongs to the class-I aminoacyl-tRNA synthetase family. As to quaternary structure, monomer. The cofactor is Zn(2+).

The protein resides in the cytoplasm. The enzyme catalyses tRNA(Cys) + L-cysteine + ATP = L-cysteinyl-tRNA(Cys) + AMP + diphosphate. In Trichormus variabilis (strain ATCC 29413 / PCC 7937) (Anabaena variabilis), this protein is Cysteine--tRNA ligase.